The following is a 185-amino-acid chain: Ribosome-recycling factor (185 aa).

Belongs to the RRF family.

Its subcellular location is the cytoplasm. Responsible for the release of ribosomes from messenger RNA at the termination of protein biosynthesis. May increase the efficiency of translation by recycling ribosomes from one round of translation to another. In Clostridium botulinum (strain Eklund 17B / Type B), this protein is Ribosome-recycling factor.